Here is a 141-residue protein sequence, read N- to C-terminus: Galactose-6-phosphate isomerase subunit LacA 1 (141 aa).

Belongs to the LacAB/RpiB family. As to quaternary structure, heteromultimeric protein consisting of LacA and LacB.

The catalysed reaction is aldehydo-D-galactose 6-phosphate = keto-D-tagatose 6-phosphate. It participates in carbohydrate metabolism; D-galactose 6-phosphate degradation; D-tagatose 6-phosphate from D-galactose 6-phosphate: step 1/1. The protein is Galactose-6-phosphate isomerase subunit LacA 1 of Streptococcus pyogenes serotype M1.